The primary structure comprises 717 residues: Serine/threonine-protein kinase STE11 (717 aa).

In terms of domain architecture, SAM spans 20 to 84 (NDLPFVQLFL…LRKSKSFQRD (65 aa)). S323 bears the Phosphoserine mark. One can recognise a Protein kinase domain in the interval 415 to 712 (WLKGACIGSG…ALELLQHPWL (298 aa)). ATP contacts are provided by residues 421 to 429 (IGSGSFGSV) and K444. Positions 452–466 (NIGVPTDNNKQANSD) are enriched in polar residues. Positions 452-481 (NIGVPTDNNKQANSDENNEQEEQQEKIEDV) are disordered. Phosphoserine is present on S465. D579 serves as the catalytic Proton acceptor.

The protein belongs to the protein kinase superfamily. STE Ser/Thr protein kinase family. MAP kinase kinase kinase subfamily. In terms of assembly, homodimer. Interacts (via SAM domain) with STE50 (via SAM domain). Interacts with PBS2 and SHO1.

The catalysed reaction is L-seryl-[protein] + ATP = O-phospho-L-seryl-[protein] + ADP + H(+). It carries out the reaction L-threonyl-[protein] + ATP = O-phospho-L-threonyl-[protein] + ADP + H(+). Serine/threonine protein kinase required for cell-type-specific transcription and signal transduction in yeast. It is thought that it phosphorylates the STE7 protein kinase which itself, phosphorylates the FUS3 and or KSS1 kinases. The sequence is that of Serine/threonine-protein kinase STE11 (STE11) from Saccharomyces cerevisiae (strain ATCC 204508 / S288c) (Baker's yeast).